Reading from the N-terminus, the 485-residue chain is Protein DETOXIFICATION 8 (485 aa).

The disordered stretch occupies residues 1 to 26; the sequence is MENGFSLVPKEEEEEEDYSNEKSEDQ. 12 helical membrane passes run 41-61, 74-94, 118-138, 159-179, 188-208, 212-232, 263-283, 297-317, 338-358, 381-401, 414-434, and 442-462; these read FMAA…VISI, AVAI…FGLA, YGSM…WVFM, SIWL…TRFF, LFLS…LLVY, FGIV…VGLL, LAIP…LLIL, VLSI…AIGA, AANS…ISLY, ITPF…LSGV, ANIG…CFVV, and WIGI…VTFF.

Belongs to the multi antimicrobial extrusion (MATE) (TC 2.A.66.1) family.

It localises to the membrane. The protein is Protein DETOXIFICATION 8 of Arabidopsis thaliana (Mouse-ear cress).